We begin with the raw amino-acid sequence, 352 residues long: Ion-translocating oxidoreductase complex subunit D (352 aa).

A run of 5 helical transmembrane segments spans residues 20–40 (IMLLVLLAAVPGIAAQLWFFG), 42–62 (GTLVQILLASVSALLAEALVL), 78–109 (ALLTGLLLAVSIPPLAPWWMVVLGTVFAVIIA), 123–143 (PAMIGYVVLLISFPVQMTSWL), and 148–168 (IAVNIPGFIDAIQVIFSGHTA). Residue Thr-187 is modified to FMN phosphoryl threonine. 5 helical membrane passes run 214 to 234 (ILAGAGWQWVNLAWLAGGLWL), 242 to 262 (WHIPLSFLVTLALCATLGWLF), 267 to 287 (LAAPQIHLLSGATMLGAFFIL), 301 to 321 (LIFGALAGLLVWLIRSFGGYP), and 322 to 342 (DGVAFAVLLANITVPLIDYYT).

The protein belongs to the NqrB/RnfD family. In terms of assembly, the complex is composed of six subunits: RsxA, RsxB, RsxC, RsxD, RsxE and RsxG. FMN serves as cofactor.

The protein resides in the cell inner membrane. Functionally, part of a membrane-bound complex that couples electron transfer with translocation of ions across the membrane. Required to maintain the reduced state of SoxR. In Escherichia coli (strain SE11), this protein is Ion-translocating oxidoreductase complex subunit D.